A 615-amino-acid polypeptide reads, in one-letter code: Dihydroxy-acid dehydratase (615 aa).

D81 contributes to the Mg(2+) binding site. [2Fe-2S] cluster is bound at residue C122. Mg(2+) contacts are provided by D123 and K124. The residue at position 124 (K124) is an N6-carboxylysine. C195 provides a ligand contact to [2Fe-2S] cluster. E491 contributes to the Mg(2+) binding site. Residue S517 is the Proton acceptor of the active site.

The protein belongs to the IlvD/Edd family. As to quaternary structure, homodimer. Requires [2Fe-2S] cluster as cofactor. The cofactor is Mg(2+).

The enzyme catalyses (2R)-2,3-dihydroxy-3-methylbutanoate = 3-methyl-2-oxobutanoate + H2O. It catalyses the reaction (2R,3R)-2,3-dihydroxy-3-methylpentanoate = (S)-3-methyl-2-oxopentanoate + H2O. It participates in amino-acid biosynthesis; L-isoleucine biosynthesis; L-isoleucine from 2-oxobutanoate: step 3/4. The protein operates within amino-acid biosynthesis; L-valine biosynthesis; L-valine from pyruvate: step 3/4. Functionally, functions in the biosynthesis of branched-chain amino acids. Catalyzes the dehydration of (2R,3R)-2,3-dihydroxy-3-methylpentanoate (2,3-dihydroxy-3-methylvalerate) into 2-oxo-3-methylpentanoate (2-oxo-3-methylvalerate) and of (2R)-2,3-dihydroxy-3-methylbutanoate (2,3-dihydroxyisovalerate) into 2-oxo-3-methylbutanoate (2-oxoisovalerate), the penultimate precursor to L-isoleucine and L-valine, respectively. The sequence is that of Dihydroxy-acid dehydratase from Pseudoalteromonas atlantica (strain T6c / ATCC BAA-1087).